Consider the following 157-residue polypeptide: Transcription elongation factor GreA (157 aa).

A coiled-coil region spans residues 17–37 (ELERLLKLRPQISEAIAEARE).

This sequence belongs to the GreA/GreB family.

In terms of biological role, necessary for efficient RNA polymerase transcription elongation past template-encoded arresting sites. The arresting sites in DNA have the property of trapping a certain fraction of elongating RNA polymerases that pass through, resulting in locked ternary complexes. Cleavage of the nascent transcript by cleavage factors such as GreA or GreB allows the resumption of elongation from the new 3'terminus. GreA releases sequences of 2 to 3 nucleotides. The chain is Transcription elongation factor GreA from Vibrio parahaemolyticus serotype O3:K6 (strain RIMD 2210633).